A 141-amino-acid polypeptide reads, in one-letter code: Hemoglobin subunit alpha-D (141 aa).

The region spanning 1-141 (MLTAEDKKLI…VSAVLAEKYR (141 aa)) is the Globin domain. Heme b is bound by residues His58 and His87.

It belongs to the globin family. In terms of assembly, heterotetramer of two alpha-D chains and two beta chains. Red blood cells.

Involved in oxygen transport from the lung to the various peripheral tissues. The chain is Hemoglobin subunit alpha-D (HBAD) from Meleagris gallopavo (Wild turkey).